A 74-amino-acid polypeptide reads, in one-letter code: ATP synthase subunit 9, mitochondrial (74 aa).

2 consecutive transmembrane segments (helical) span residues methionine 8–phenylalanine 28 and isoleucine 50–isoleucine 70.

It belongs to the ATPase C chain family. F-type ATPases have 2 components, CF(1) - the catalytic core - and CF(0) - the membrane proton channel. CF(1) has five subunits: alpha(3), beta(3), gamma(1), delta(1), epsilon(1). CF(0) has three main subunits: a, b and c.

It localises to the mitochondrion membrane. In terms of biological role, this protein is one of the chains of the nonenzymatic membrane component (F0) of mitochondrial ATPase. In Solanum tuberosum (Potato), this protein is ATP synthase subunit 9, mitochondrial (ATP9).